The following is a 702-amino-acid chain: MPYSHPLVPLSFMTTALVTTALPYANGPLHLGHLVGYIQADIWVRARRLGGHNTWFVCADDTHGTPIMLAAEKAGMPPEAFIATTQASHERDFAAFNVAFDHYDSTHSPVNRHLTEQSYLTLKQAGHITCRSVAQFYDPAKGMFLPDRYVKGTCPNCGATDQYGDNCEACGATYDPTELKNPYSVISGTTPELRDSEHFFFEVAHFDTFLRHWLSGDVALPSVKNKLKEWLDAKGGLRPWDISRDAPYFGFEIPNQPGKYFYVWLDAPIGYLCSFKTLCTRIGEDFDTHLRSGTTTELHHFIGKDIVNFHALFWPAVLHGTGHRAPTRLHVNGYLTVDGAKMSKSRGTFIMARTYLDAGLEPDALRYYFAAKSSGDVDDLDLNLSDFVARVNADLVGKLVNLASRCASFIGTRFNGQLADTLPDRIQYDQFVAALTPIRDAYERNDTASAIRQTMQLADEANKYIDETKPWIIAKQHNADAQLHAVCTQGLNLFRVLITALKPILPHTSIQAETFLAAPVTAWQDVNQPLIGGHTIHPYSPLFTRIDKKVIEVMINASKDTLAPPPASAKQQNASMSNTAPPPTAEKPETTAPTIGIDDFAKLDLRIGKVLVCEYVEGSDKLLRFELDAGPLGKRQIFSGIRASYSNPETLIGRNVVFIANLAPRKMRFGISQGMILSAGFDSGTLALLDADSSAQPGMPVR.

The 'HIGH' region signature appears at 23-33 (PYANGPLHLGH). Residues Cys154, Cys157, Cys167, and Cys170 each coordinate Zn(2+). Residues 341 to 345 (KMSKS) carry the 'KMSKS' region motif. Residue Lys344 coordinates ATP. The tract at residues 562–593 (LAPPPASAKQQNASMSNTAPPPTAEKPETTAP) is disordered. Residues 569-578 (AKQQNASMSN) show a composition bias toward polar residues. One can recognise a tRNA-binding domain in the interval 599–702 (DFAKLDLRIG…SSAQPGMPVR (104 aa)).

Belongs to the class-I aminoacyl-tRNA synthetase family. MetG type 1 subfamily. As to quaternary structure, homodimer. Zn(2+) is required as a cofactor.

It localises to the cytoplasm. The catalysed reaction is tRNA(Met) + L-methionine + ATP = L-methionyl-tRNA(Met) + AMP + diphosphate. In terms of biological role, is required not only for elongation of protein synthesis but also for the initiation of all mRNA translation through initiator tRNA(fMet) aminoacylation. This is Methionine--tRNA ligase from Xylella fastidiosa (strain 9a5c).